The primary structure comprises 178 residues: Peptide methionine sulfoxide reductase MsrA (178 aa).

C14 is a catalytic residue.

The protein belongs to the MsrA Met sulfoxide reductase family.

The catalysed reaction is L-methionyl-[protein] + [thioredoxin]-disulfide + H2O = L-methionyl-(S)-S-oxide-[protein] + [thioredoxin]-dithiol. It catalyses the reaction [thioredoxin]-disulfide + L-methionine + H2O = L-methionine (S)-S-oxide + [thioredoxin]-dithiol. Its function is as follows. Has an important function as a repair enzyme for proteins that have been inactivated by oxidation. Catalyzes the reversible oxidation-reduction of methionine sulfoxide in proteins to methionine. This Bacillus pumilus (strain SAFR-032) protein is Peptide methionine sulfoxide reductase MsrA.